The following is a 105-amino-acid chain: MMIEGLEKMLAKGVDNALLRFGLGKGYLDAGDAERAAEHLQRCVEQDPKYSAGWKLLGKARQAAGDLAGARQAWEQGLATAATHGDKQAEKEMTVFLRKLDRART.

2 TPR repeats span residues 17 to 50 (ALLR…DPKY) and 52 to 84 (AGWK…AATH).

The chain is TPR repeat-containing protein PA0015 from Pseudomonas aeruginosa (strain ATCC 15692 / DSM 22644 / CIP 104116 / JCM 14847 / LMG 12228 / 1C / PRS 101 / PAO1).